The sequence spans 115 residues: Large ribosomal subunit protein bL19 (115 aa).

Belongs to the bacterial ribosomal protein bL19 family.

In terms of biological role, this protein is located at the 30S-50S ribosomal subunit interface and may play a role in the structure and function of the aminoacyl-tRNA binding site. This chain is Large ribosomal subunit protein bL19, found in Syntrophotalea carbinolica (strain DSM 2380 / NBRC 103641 / GraBd1) (Pelobacter carbinolicus).